The sequence spans 514 residues: Embryonic protein UVS.2 (514 aa).

The N-terminal stretch at 1-19 (MDVKISAILLACIIQYAVS) is a signal peptide. The 197-residue stretch at 90 to 286 (SAINDARFLW…SKINKLYECN (197 aa)) folds into the Peptidase M12A domain. N-linked (GlcNAc...) asparagine glycosylation occurs at N112. 6 disulfide bridges follow: C137-C285, C158-C178, C288-C314, C340-C363, C402-C428, and C455-C475. Residue H186 participates in Zn(2+) binding. Residue E187 is part of the active site. Residues H190 and H196 each contribute to the Zn(2+) site. N-linked (GlcNAc...) asparagine glycosylation is present at N199. CUB domains lie at 288-400 (CSNL…YGSI) and 402-513 (CGGA…YTFV). 3 N-linked (GlcNAc...) asparagine glycosylation sites follow: N421, N427, and N464.

It depends on Zn(2+) as a cofactor.

The protein is Embryonic protein UVS.2 of Xenopus laevis (African clawed frog).